A 351-amino-acid chain; its full sequence is Nicotinate-nucleotide--dimethylbenzimidazole phosphoribosyltransferase (351 aa).

The Proton acceptor role is filled by E317.

The protein belongs to the CobT family.

The enzyme catalyses 5,6-dimethylbenzimidazole + nicotinate beta-D-ribonucleotide = alpha-ribazole 5'-phosphate + nicotinate + H(+). Its pathway is nucleoside biosynthesis; alpha-ribazole biosynthesis; alpha-ribazole from 5,6-dimethylbenzimidazole: step 1/2. Its function is as follows. Catalyzes the synthesis of alpha-ribazole-5'-phosphate from nicotinate mononucleotide (NAMN) and 5,6-dimethylbenzimidazole (DMB). This chain is Nicotinate-nucleotide--dimethylbenzimidazole phosphoribosyltransferase, found in Bradyrhizobium sp. (strain BTAi1 / ATCC BAA-1182).